The following is a 397-amino-acid chain: DnaJ homolog subfamily A member 1 (397 aa).

The J domain maps to 6–68; the sequence is TYYDVLGVKP…KKRELYDKGG (63 aa). Lysine 66 carries the N6-acetyllysine modification. Serine 83 is subject to Phosphoserine. The CR-type zinc finger occupies 121 to 205; that stretch reads GATRKLALQK…CNGRKIVREK (85 aa). The Zn(2+) site is built by cysteine 134, cysteine 137, cysteine 150, cysteine 153, cysteine 177, cysteine 180, cysteine 193, and cysteine 196. CXXCXGXG motif repeat units follow at residues 134–141, 150–157, 177–184, and 193–200; these read CDKCEGRG, CPNCRGTG, CMECQGHG, and CKSCNGRK. Position 335 is a phosphoserine (serine 335). Positions 352-397 are disordered; sequence VEETDEMDQVELVDFDPNQERRRHYNGEAYEDDEHHPRGGVQCQTS. Residues 353-365 show a composition bias toward acidic residues; that stretch reads EETDEMDQVELVD. Tyrosine 381 is subject to Phosphotyrosine. Residue cysteine 394 is modified to Cysteine methyl ester. A lipid anchor (S-farnesyl cysteine) is attached at cysteine 394. A propeptide spans 395–397 (removed in mature form); sequence QTS.

Identified in a complex with HSPA1B and BAX. Interacts with RNF207.

Its subcellular location is the membrane. The protein resides in the cytoplasm. It is found in the microsome. It localises to the mitochondrion. The protein localises to the nucleus. Its subcellular location is the perinuclear region. Its function is as follows. Co-chaperone for HSPA8/Hsc70. Plays a role in protein transport into mitochondria via its role as co-chaperone. Functions as co-chaperone for HSPA1B and negatively regulates the translocation of BAX from the cytosol to mitochondria in response to cellular stress, thereby protecting cells against apoptosis. Stimulates ATP hydrolysis, but not the folding of unfolded proteins mediated by HSPA1A (in vitro). Promotes apoptosis in response to cellular stress mediated by exposure to anisomycin or UV. This is DnaJ homolog subfamily A member 1 (DNAJA1) from Bos taurus (Bovine).